A 15639-amino-acid chain; its full sequence is FR901469 synthetase (15639 aa).

The region spanning His5–Gln81 is the Carrier 1 domain. O-(pantetheine 4'-phosphoryl)serine is present on Ser42. Over residues Leu82–Asn94 the composition is skewed to acidic residues. Residues Leu82 to Leu105 are disordered. The tract at residues Pro140 to Asp553 is condensation 1. Residues Thr579–Ile971 form an adenylation 1 region. Residues Thr1108–Thr1184 form the Carrier 2 domain. An O-(pantetheine 4'-phosphoryl)serine modification is found at Ser1145. The tract at residues Arg1219–Ala1626 is epimerase 1. The segment at Glu1667–Asn2097 is condensation 2. An adenylation 2 region spans residues Gln2122–Arg2518. Positions Val2654–Thr2730 constitute a Carrier 3 domain. Position 2691 is an O-(pantetheine 4'-phosphoryl)serine (Ser2691). Positions Val2761–Met3176 are epimerase 2. A condensation 3 region spans residues Gln3215–Asp3640. The interval Thr3669–Ile4059 is adenylation 3. The Carrier 4 domain maps to Pro4193–Gly4269. O-(pantetheine 4'-phosphoryl)serine is present on Ser4230. The interval Glu4316–Glu4714 is condensation 4. Positions Thr4756–Arg5149 are adenylation 4. The Carrier 5 domain maps to Glu5284–Thr5360. Ser5321 carries the post-translational modification O-(pantetheine 4'-phosphoryl)serine. Residues Glu5402–Ser5802 are condensation 5. The tract at residues Lys5847–Val6238 is adenylation 5. A Carrier 6 domain is found at Gln6375 to Val6451. The residue at position 6412 (Ser6412) is an O-(pantetheine 4'-phosphoryl)serine. The tract at residues Glu6494–Ser6889 is condensation 6. The segment at Trp6952 to Arg7335 is adenylation 6. One can recognise a Carrier 7 domain in the interval Thr7473–Glu7546. An O-(pantetheine 4'-phosphoryl)serine modification is found at Ser7507. An epimerase 3 region spans residues Met7580–Gln7992. The interval Glu8034 to Ser8459 is condensation 7. Residues Gln8486–Arg8882 form an adenylation 7 region. A Carrier 8 domain is found at Gln9015–Glu9091. Ser9052 is subject to O-(pantetheine 4'-phosphoryl)serine. The tract at residues Glu9136–Asp9535 is condensation 8. The tract at residues Lys9583–Arg9974 is adenylation 8. Residues Glu10110–Ile10186 enclose the Carrier 9 domain. Position 10147 is an O-(pantetheine 4'-phosphoryl)serine (Ser10147). Residues Ile10186–Glu10208 form a disordered region. Residues Asp10187 to Val10206 are compositionally biased toward acidic residues. A condensation 9 region spans residues Val10240–Ile10662. Residues Lys10683 to Arg11082 form an adenylation 9 region. One can recognise a Carrier 10 domain in the interval Glu11217 to Gly11293. O-(pantetheine 4'-phosphoryl)serine is present on Ser11254. Residues Glu11329–Val11725 form a condensation 10 region. Residues Phe11770–Arg12165 are adenylation 10. One can recognise a Carrier 11 domain in the interval Glu12298–Ile12374. At Ser12335 the chain carries O-(pantetheine 4'-phosphoryl)serine. The segment at Glu12418–Gln12830 is condensation 11. The tract at residues Ser12861–Arg13249 is adenylation 11. One can recognise a Carrier 12 domain in the interval Met13383–Val13459. At Ser13420 the chain carries O-(pantetheine 4'-phosphoryl)serine. The segment at Ala13476–Gln13901 is epimerase 4. Residues Glu13940–Gln14369 are condensation 12. The adenylation 12 stretch occupies residues Arg14390–Arg14789. Residues Leu14916–Arg14992 enclose the Carrier 13 domain. O-(pantetheine 4'-phosphoryl)serine is present on Ser14953. The interval Gln15062–Gln15433 is condensation 13. 2 disordered regions span residues Glu15434–Gln15511 and Val15617–Ile15639. Low complexity predominate over residues Asn15455–Gly15472. A compositionally biased stretch (basic and acidic residues) spans Ala15482–Lys15494. Residues Val15495–Gln15511 show a composition bias toward polar residues.

It belongs to the NRP synthetase family.

Its pathway is antifungal biosynthesis. Functionally, nonribosomal peptide synthetase; part of the gene cluster that mediates the biosynthesis of the antifungal antibiotic FR901469, an inhibitor of beta-1,3-glucansynthase, exerting antifungal activity against the pathogenes Candida albicans and Aspergillus fumigatus. FR901469 is a cyclic depsipeptide containing 12 amino acid residues and a fatty acid chain. The NRPS frbI contains 12 modules responsible for the formation of the depsipeptide backbone which is denoted as Acyl-Thr-Ala-Tyr-Val-4OHPro-Thr-Thr-3OHPro-threo3OHGln-Gly-Thr-Orn-OH (C71H116N14O23). The PKS frbB is probably involved in the production of the hydrocarbon chain, and the acyl-CoA ligase frbC might be involved in the transport of the chain to the peptide ptoduct of frbI. Because FR901469 contains 3 hydroxylated amino acid residues, the 3 oxygenases frbA, frbH, and frbJ might be participating in amino acid hydroxylation. As no thioesterase domains were detected in frbI or frbB, the thioesterases frbD and frbE may instead release and cyclize the products of the NRPS and PKS, respectively. The sequence is that of FR901469 synthetase from Dothideomycetidae sp. (strain 11243) (Fungal sp. (strain No.11243)).